We begin with the raw amino-acid sequence, 66 residues long: Large ribosomal subunit protein bL35 (66 aa).

It belongs to the bacterial ribosomal protein bL35 family.

The sequence is that of Large ribosomal subunit protein bL35 from Synechococcus sp. (strain RCC307).